A 273-amino-acid polypeptide reads, in one-letter code: uncharacterized protein (273 aa).

A signal peptide spans 1–21 (MKILRWLFALVMLIATTEAMA).

The protein to S.typhimurium YadU.

Its function is as follows. Part of the yfcOPQRSUV fimbrial operon. Could contribute to adhesion to various surfaces in specific environmental niches. Increases adhesion to eukaryotic T24 bladder epithelial cells in the absence of fim genes. This is an uncharacterized protein from Escherichia coli (strain K12).